We begin with the raw amino-acid sequence, 420 residues long: MPISESFARRLFPLLDELTNTYPTPFHIYDERAIVQTHRNVAQAFADSAFRQYFAVKALPTPAILSLLLKEGSGLDCSSPVELMLAERLGARGDDIVFTSNNTSLSEYQMALQAGALVTFDDRSMLEQVIALPDIVAFRVSPHGVIARSSQMGNAQQSKFGIPEAELVQSYREAWDRGARRFGIHGMMCANELSLEAAVQAGVQVIEVGARVAREAGIELEYINIGGGLGIPYRIDDQALDLTAYADALKRALKQAFPHNTPKLLMELGRYISGPHGVLVSRVINRCSKGREIVGLDASMSALMRPGLYGAYHHLTLPFADQRPEGVFDVVGALCENFDKFAVDRLLPSPLIGDLALIHDTGAHGHAMGFTYNGRLRPAELMLTDDGDVVEIRRAETFDDHTGPIQWQPVDVFNPTRCVK.

N6-(pyridoxal phosphate)lysine is present on lysine 57.

The protein belongs to the Orn/Lys/Arg decarboxylase class-II family. Requires pyridoxal 5'-phosphate as cofactor.

Its function is as follows. Involved in tabtoxin production and pathogenicity. This Pseudomonas amygdali pv. tabaci (Pseudomonas syringae pv. tabaci) protein is Protein TabA (tabA).